We begin with the raw amino-acid sequence, 638 residues long: Guanylate-binding protein 7 (638 aa).

The GTPase domain (Globular) stretch occupies residues 1–310 (MASGPNMEAP…DAINSGDVPC (310 aa)). Residues 35 to 277 (TQPVVVVAIV…FCSYIFSNSK (243 aa)) enclose the GB1/RHD3-type G domain. Residues 45 to 52 (GLYRTGKS), 67 to 69 (LGT), and 97 to 101 (DTEGL) contribute to the GTP site. The tract at residues 311–638 (LENAVTTLAQ…TQNSDKVRKL (328 aa)) is interaction with the CYBA-CYBB complex. The C-terminal tail; required for its localization to cytoplasmic vesicle stretch occupies residues 590–638 (SSLGAKILDGFGDVLISVVPGSGKYFGLGLKILSSQMNQTQNSDKVRKL).

Belongs to the TRAFAC class dynamin-like GTPase superfamily. GB1/RHD3 GTPase family. GB1 subfamily. Monomer and dimer. Interacts with CYBA, CYBA-CYBB complex and ATG4B. Interacts (via GB1/RHD3-type G domain) with NCF2 and NCF2-NCF4 complex.

Its subcellular location is the cytoplasmic vesicle membrane. The enzyme catalyses GTP + H2O = GDP + phosphate + H(+). It carries out the reaction GDP + H2O = GMP + phosphate + H(+). Inhibited by orthovanadate, berylium fluoride and aluminum flouride. Interferon (IFN)-inducible GTPase that plays important roles in innate immunity against a diverse range of bacterial, viral and protozoan pathogens. Hydrolyzes GTP to GMP in two consecutive cleavage reactions and predominantly uses GTP and not GDP or GMP as the substrate. Following infection, recruited to the pathogen-containing vacuoles or vacuole-escaped bacteria and acts as a positive regulator of inflammasome assembly by promoting the release of inflammasome ligands from bacteria. Acts by promoting lysis of pathogen-containing vacuoles, releasing pathogens into the cytosol. Following pathogen release in the cytosol, promotes recruitment of proteins that mediate bacterial cytolysis, such as Gm12250/Irgb10: this liberates ligands that are detected by inflammasomes, such as lipopolysaccharide (LPS) that activates the non-canonical CASP4/CASP11 inflammasome or double-stranded DNA (dsDNA) that activates the AIM2 inflammasome. Also promotes IFN-gamma-mediated host defense against bacterial infections by regulating oxidative responses and bacteriolytic peptide generation. May help to assemble NADPH oxidase on phagosomal membranes by acting as a bridging protein between NADPH oxidase cytosolic subunits NCF2-NCF4 and the membrane subunits CYBA-CYBB. Participates along with GBP1 in trafficking monoubiquinated protein cargo to autolysosomes for generating ubiquitin-derived antimicrobial peptides. Facilitates influenza A virus replication by inhibiting the activation of NF-kappaB and JAK-STAT signaling pathways and the expression of type I, type III interferons and pro-inflammatory cytokines. Confers protection to several pathogens, including the bacterial pathogens Listeria monocytogenes and Mycobacterium bovis BCG as well as the protozoan pathogen Toxoplasma gondii. Required for disruption of the parasitophorous vacuole formed following T.gondii infection and subsequent killing of the parasite. The chain is Guanylate-binding protein 7 (Gbp7) from Mus musculus (Mouse).